We begin with the raw amino-acid sequence, 930 residues long: APC membrane recruitment protein 1 (930 aa).

Disordered stretches follow at residues M1–V33, F55–Q76, C104–S133, T161–T193, E222–G245, and E366–S454. A compositionally biased stretch (basic and acidic residues) spans E222 to R242. Composition is skewed to polar residues over residues D377 to M399 and S413 to N424. The segment covering E439–R452 has biased composition (basic and acidic residues).

It belongs to the Amer family.

It localises to the cytoplasm. The protein resides in the cell membrane. It is found in the nucleus. Functionally, regulator of the canonical Wnt signaling pathway. Acts by specifically binding phosphatidylinositol 4,5-bisphosphate (PtdIns(4,5)P2), translocating to the cell membrane and interacting with key regulators of the canonical Wnt signaling pathway, such as components of the beta-catenin destruction complex. Acts both as a positive and negative regulator of the Wnt signaling pathway, depending on the context. In Danio rerio (Zebrafish), this protein is APC membrane recruitment protein 1 (amer1).